The sequence spans 350 residues: Dihydroorotase (350 aa).

Zn(2+)-binding residues include H17 and H19. Substrate contacts are provided by residues 19 to 21 (HLR) and N45. Zn(2+) is bound by residues K103, H140, and H178. N6-carboxylysine is present on K103. H140 is a substrate binding site. L224 contributes to the substrate binding site. Zn(2+) is bound at residue D252. Residue D252 is part of the active site. Substrate-binding residues include H256 and A268.

The protein belongs to the metallo-dependent hydrolases superfamily. DHOase family. Class II DHOase subfamily. As to quaternary structure, homodimer. The cofactor is Zn(2+).

The catalysed reaction is (S)-dihydroorotate + H2O = N-carbamoyl-L-aspartate + H(+). It participates in pyrimidine metabolism; UMP biosynthesis via de novo pathway; (S)-dihydroorotate from bicarbonate: step 3/3. Catalyzes the reversible cyclization of carbamoyl aspartate to dihydroorotate. The polypeptide is Dihydroorotase (Buchnera aphidicola subsp. Acyrthosiphon pisum (strain APS) (Acyrthosiphon pisum symbiotic bacterium)).